Here is a 535-residue protein sequence, read N- to C-terminus: Mannan polymerase I complex VAN1 subunit (535 aa).

Topologically, residues 1-64 (MGMFFNLRSN…STPSKFQLTV (64 aa)) are cytoplasmic. The tract at residues 22–48 (LPISRNGSSNNIKDKRSEHNSNSLKGK) is disordered. Position 25 is a phosphoserine (Ser25). Residues 65–81 (SITSLIIIAVLSLYLFI) form a helical; Signal-anchor for type II membrane protein membrane-spanning segment. The Lumenal segment spans residues 82-535 (SFLSGMGIGV…REREKRRQSE (454 aa)). Residues Asn215 and Asn251 are each glycosylated (N-linked (GlcNAc...) asparagine).

Belongs to the ANP1/MMN9/VAN1 family. Component of the M-Pol I complex which contains MNN9 and VAN1. In terms of processing, glycosylated.

It is found in the endoplasmic reticulum membrane. Its subcellular location is the golgi apparatus membrane. Its function is as follows. Involved in regulation of the phosphorylation of a number of proteins, some of which appear to be important in cell growth control. The M-Pol I complex possesses alpha-1,6-mannosyltransferase activity and is probably involved in the elongation of the mannan backbone of N-linked glycans on cell wall and periplasmic proteins. This chain is Mannan polymerase I complex VAN1 subunit (VAN1), found in Saccharomyces cerevisiae (strain ATCC 204508 / S288c) (Baker's yeast).